The sequence spans 380 residues: Enoyl-[acyl-carrier-protein] reductase, mitochondrial (380 aa).

Residues 1–9 constitute a mitochondrion transit peptide; that stretch reads MLPTFKRYM. Residue Tyr73 is the Proton donor of the active site. NADP(+) contacts are provided by residues Asn157, 185 to 188, 208 to 210, 283 to 286, and 308 to 310; these read TSSV, RDR, YGGM, and YWV. The residue at position 339 (Ser339) is a Phosphoserine. Lys373 is an NADP(+) binding site.

It belongs to the zinc-containing alcohol dehydrogenase family. Quinone oxidoreductase subfamily. Homodimer or in a complex with other proteins. Interacts with ARS1.

The protein resides in the mitochondrion matrix. It carries out the reaction a 2,3-saturated acyl-[ACP] + NADP(+) = a (2E)-enoyl-[ACP] + NADPH + H(+). The catalysed reaction is (2E,4E)-hexadienoyl-CoA + NADPH + H(+) = (4E)-hexenoyl-CoA + NADP(+). It catalyses the reaction (2E)-hexenoyl-CoA + NADPH + H(+) = hexanoyl-CoA + NADP(+). Catalyzes the NADPH-dependent reduction of trans-2-enoyl thioesters in mitochondrial fatty acid synthesis (fatty acid synthesis type II). Fatty acid chain elongation in mitochondria uses acyl carrier protein (ACP) as an acyl group carrier, but the enzyme accepts both ACP and CoA thioesters as substrates in vitro. Required for respiration and the maintenance of the mitochondrial compartment. The chain is Enoyl-[acyl-carrier-protein] reductase, mitochondrial (ETR1) from Saccharomyces cerevisiae (strain ATCC 204508 / S288c) (Baker's yeast).